The sequence spans 606 residues: MSDTSESGAGLTRFQAEASEKDSSSMMQTLLTVTQNVEVPETPKASKALEVSEDVKVSKASGVSKATEVSKTPEAREAPATQASSTTQLTDTQVLAAENKSLAADTKKQNADPQAVTMPATETKKVSHVADTKVNTKAQETEAAPSQAPADEPEPESAAAQSQENQDTRPKVKAKKARKVKHLDGEEDGSSDQSQASGTTGGRRVSKALMASMARRASRGPIAFWARRASRTRLAAWARRALLSLRSPKARRGKARRRAAKLQSSQEPEAPPPRDVALLQGRANDLVKYLLAKDQTKIPIKRSDMLKDIIKEYTDVYPEIIERAGYSLEKVFGIQLKEIDKNDHLYILLSTLEPTDAGILGTTKDSPKLGLLMVLLSIIFMNGNRSSEAVIWEVLRKLGLRPGIHHSLFGDVKKLITDEFVKQKYLDYARVPNSNPPEYEFFWGLRSYYETSKMKVLKFACKVQKKDPKEWAAQYREAMEADLKAAAEAAAEAKARAEIRARMGIGLGSENAAGPCNWDEADIGPWAKARIQAGAEAKAKAQESGSASTGASTSTNNSASASASTSGGFSAGASLTATLTFGLFAGLGGAGASTSGSSGACGFSYK.

Residues 1 to 204 are disordered; it reads MSDTSESGAG…QASGTTGGRR (204 aa). Ser2 is modified (N-acetylserine). Position 5 is a phosphoserine (Ser5). Residues 24-37 show a composition bias toward polar residues; the sequence is SSMMQTLLTVTQNV. Thr72 bears the Phosphothreonine mark. Positions 81 to 93 are enriched in polar residues; the sequence is TQASSTTQLTDTQ. Basic and acidic residues predominate over residues 122 to 131; the sequence is ETKKVSHVAD. The span at 142–164 shows a compositional bias: low complexity; it reads EAAPSQAPADEPEPESAAAQSQE. Residue Ser157 is modified to Phosphoserine. A compositionally biased stretch (basic residues) spans 171-181; that stretch reads KVKAKKARKVK. Ser190, Ser191, Ser194, Ser197, Ser244, and Ser247 each carry phosphoserine. Positions 248-260 are enriched in basic residues; it reads PKARRGKARRRAA. The interval 248–275 is disordered; the sequence is PKARRGKARRRAAKLQSSQEPEAPPPRD. Residues Ser264 and Ser265 each carry the phosphoserine modification. The MAGE domain maps to 279–478; it reads LQGRANDLVK…KEWAAQYREA (200 aa). The tract at residues 534-563 is disordered; sequence GAEAKAKAQESGSASTGASTSTNNSASASA.

In terms of assembly, interacts with GNAS. May interact with DNAJB1. Widely expressed. In the developing and adult kidney, expressed in the thick ascending limb of the loop of Henle and the distal convoluted tubules outside the loop.

Functionally, regulates the expression, localization to the plasma membrane and function of the sodium chloride cotransporters SLC12A1 and SLC12A3, two key components of salt reabsorption in the distal renal tubule. This is Melanoma-associated antigen D2 (MAGED2) from Homo sapiens (Human).